A 547-amino-acid chain; its full sequence is Chaperonin GroEL (547 aa).

ATP-binding positions include 30 to 33, Lys51, 87 to 91, Gly415, and Asp496; these read TLGP and DGTTT.

Belongs to the chaperonin (HSP60) family. Forms a cylinder of 14 subunits composed of two heptameric rings stacked back-to-back. Interacts with the co-chaperonin GroES.

The protein resides in the cytoplasm. The catalysed reaction is ATP + H2O + a folded polypeptide = ADP + phosphate + an unfolded polypeptide.. Together with its co-chaperonin GroES, plays an essential role in assisting protein folding. The GroEL-GroES system forms a nano-cage that allows encapsulation of the non-native substrate proteins and provides a physical environment optimized to promote and accelerate protein folding. The protein is Chaperonin GroEL of Histophilus somni (strain 129Pt) (Haemophilus somnus).